The primary structure comprises 502 residues: ATP synthase subunit alpha (502 aa).

169-176 (GDRQTGKT) is a binding site for ATP.

Belongs to the ATPase alpha/beta chains family. As to quaternary structure, F-type ATPases have 2 components, CF(1) - the catalytic core - and CF(0) - the membrane proton channel. CF(1) has five subunits: alpha(3), beta(3), gamma(1), delta(1), epsilon(1). CF(0) has three main subunits: a(1), b(2) and c(9-12). The alpha and beta chains form an alternating ring which encloses part of the gamma chain. CF(1) is attached to CF(0) by a central stalk formed by the gamma and epsilon chains, while a peripheral stalk is formed by the delta and b chains.

It localises to the cell inner membrane. The enzyme catalyses ATP + H2O + 4 H(+)(in) = ADP + phosphate + 5 H(+)(out). Its function is as follows. Produces ATP from ADP in the presence of a proton gradient across the membrane. The alpha chain is a regulatory subunit. This is ATP synthase subunit alpha from Geobacter sp. (strain M21).